The sequence spans 243 residues: tRNA (guanine-N(7)-)-methyltransferase (243 aa).

S-adenosyl-L-methionine-binding residues include Glu-74, Glu-99, Asp-126, and Asp-149. Residue Asp-149 is part of the active site. Residues Lys-153, Asp-185, and 221–224 (TKFE) each bind substrate.

This sequence belongs to the class I-like SAM-binding methyltransferase superfamily. TrmB family.

The enzyme catalyses guanosine(46) in tRNA + S-adenosyl-L-methionine = N(7)-methylguanosine(46) in tRNA + S-adenosyl-L-homocysteine. It participates in tRNA modification; N(7)-methylguanine-tRNA biosynthesis. Its function is as follows. Catalyzes the formation of N(7)-methylguanine at position 46 (m7G46) in tRNA. The sequence is that of tRNA (guanine-N(7)-)-methyltransferase from Psychromonas ingrahamii (strain DSM 17664 / CCUG 51855 / 37).